Reading from the N-terminus, the 422-residue chain is Zinc-regulated transporter 2 (422 aa).

At 1–27 (MVDLIARDDSVDTCQASNGYNGHAGLR) the chain is on the extracellular side. The helical transmembrane segment at 28 to 48 (ILAVFIILISSGLGVYFPILS) threads the bilayer. Over 49–60 (SRYSFIRLPNWC) the chain is Cytoplasmic. The chain crosses the membrane as a helical span at residues 61 to 81 (FFIAKFFGSGVIVATAFVHLL). Residues 82–99 (QPAAEALGDECLGGTFAE) are Extracellular-facing. A helical membrane pass occupies residues 100-120 (YPWAFGICLMSLFLLFFTEII). Topologically, residues 121–262 (THYFVAKTLG…EEDKEQYLNQ (142 aa)) are cytoplasmic. Residues Ser148, Ser149, Ser162, and Ser170 each carry the phosphoserine modification. Position 188 is a phosphothreonine (Thr188). A helical membrane pass occupies residues 263–283 (ILAVFILEFGIIFHSVFVGLS). Residues 284–290 (LSVAGEE) are Extracellular-facing. Residues 291–311 (FETLFIVLTFHQMFEGLGLGT) traverse the membrane as a helical segment. Residues 312 to 326 (RVAETNWPESKKYMP) lie on the Cytoplasmic side of the membrane. The helical transmembrane segment at 327–347 (WLMGLAFTLTSPIAVAVGIGV) threads the bilayer. The Extracellular portion of the chain corresponds to 348 to 358 (RHSWIPGSRRA). Residues 359–379 (LIANGVFDSISSGILIYTGLV) traverse the membrane as a helical segment. Residues 380 to 400 (ELMAHEFLYSNQFKGPDGLKK) lie on the Cytoplasmic side of the membrane. The chain crosses the membrane as a helical span at residues 401 to 421 (MLSAYLIMCCGAALMALLGKW). A topological domain (extracellular) is located at residue Ala422.

It belongs to the ZIP transporter (TC 2.A.5) family.

The protein localises to the membrane. Low-affinity zinc transport protein. Active in zinc-replete cells and is time-, temperature- and concentration-dependent and prefers zinc over other metals as its substrate. This chain is Zinc-regulated transporter 2 (ZRT2), found in Saccharomyces cerevisiae (strain ATCC 204508 / S288c) (Baker's yeast).